The chain runs to 184 residues: Ribosome-recycling factor (184 aa).

This sequence belongs to the RRF family.

The protein localises to the cytoplasm. Its function is as follows. Responsible for the release of ribosomes from messenger RNA at the termination of protein biosynthesis. May increase the efficiency of translation by recycling ribosomes from one round of translation to another. This chain is Ribosome-recycling factor, found in Caldicellulosiruptor bescii (strain ATCC BAA-1888 / DSM 6725 / KCTC 15123 / Z-1320) (Anaerocellum thermophilum).